Consider the following 827-residue polypeptide: Putative potassium transporter 12 (827 aa).

Residues 1–31 (MEEIEEGSSNNSIRRVGTGSSDRRWVDGSEV) form a disordered region. The Cytoplasmic portion of the chain corresponds to 1 to 82 (MEEIEEGSSN…AGSHGHNLKD (82 aa)). A helical transmembrane segment spans residues 83-103 (LSLLTTLGIAFQTLGVVYGDM). Residues 104 to 129 (GTSPLYVFSDVFSKVPIRSEVDVLGA) are Extracellular-facing. Residues 130 to 150 (LSLVIYTIAVIPLAKYVFVVL) form a helical membrane-spanning segment. At 151 to 216 (KANDNGEGGT…ALETKGYLKT (66 aa)) the chain is on the cytoplasmic side. Residues 217-237 (LLLLLVLMGTSMIIGDGILTP) traverse the membrane as a helical segment. The Extracellular segment spans residues 238-253 (AMSVMSAMSGLQGEVK). A helical transmembrane segment spans residues 254-274 (GFGTNALVMSSIVILVALFSI). The Cytoplasmic portion of the chain corresponds to 275–281 (QRFGTGK). Residues 282–302 (VGFLFAPVLALWFFSLGAIGI) form a helical membrane-spanning segment. The Extracellular segment spans residues 303–335 (YNLLKYDFTVIRALNPFYIVLFFNKNSKQAWSA). A helical membrane pass occupies residues 336 to 356 (LGGCVLCITGAEAMFADLGHF). At 357–363 (SVRSIQM) the chain is on the cytoplasmic side. Residues 364–384 (AFTCVVFPCLLLAYMGQAAYL) form a helical membrane-spanning segment. Residues 385 to 402 (TKHPEASARIFYDSVPKS) lie on the Extracellular side of the membrane. Residues 403-423 (LFWPVFVIATLAAMIASQAMI) traverse the membrane as a helical segment. Residues 424 to 454 (SATFSCVKQAMALGCFPRLKIIHTSKKRIGQ) lie on the Cytoplasmic side of the membrane. The chain crosses the membrane as a helical span at residues 455–475 (IYIPVINWFLMIMCILVVSIF). Topologically, residues 476-480 (RSTTH) are extracellular. The next 2 membrane-spanning stretches (helical) occupy residues 481–501 (IANAYGIAEVGVMMVSTVLVT) and 502–522 (LVMLLIWQTNIFLALCFPLIF). At 523-536 (GSVETIYLLAVLTK) the chain is on the extracellular side. Residues 537–557 (ILEGGWVPLVFATFFLTVMYI) form a helical membrane-spanning segment. The Cytoplasmic portion of the chain corresponds to 558-827 (WNYGSVLKYQ…ILQAGMTYMV (270 aa)). The disordered stretch occupies residues 728–750 (RSEPEQELDSEVLPSSSVGSSME). Low complexity predominate over residues 738 to 748 (EVLPSSSVGSS).

This sequence belongs to the HAK/KUP transporter (TC 2.A.72.3) family.

The protein resides in the cell membrane. Its function is as follows. Putative potassium transporter. This is Putative potassium transporter 12 (POT12) from Arabidopsis thaliana (Mouse-ear cress).